Reading from the N-terminus, the 271-residue chain is 3-methyl-2-oxobutanoate hydroxymethyltransferase (271 aa).

Positions 53 and 92 each coordinate Mg(2+). Residues 53–54 (DS), D92, and K120 each bind 3-methyl-2-oxobutanoate. E122 contributes to the Mg(2+) binding site. The Proton acceptor role is filled by E189.

Belongs to the PanB family. In terms of assembly, homodecamer; pentamer of dimers. Mg(2+) serves as cofactor.

Its subcellular location is the cytoplasm. The catalysed reaction is 3-methyl-2-oxobutanoate + (6R)-5,10-methylene-5,6,7,8-tetrahydrofolate + H2O = 2-dehydropantoate + (6S)-5,6,7,8-tetrahydrofolate. The protein operates within cofactor biosynthesis; (R)-pantothenate biosynthesis; (R)-pantoate from 3-methyl-2-oxobutanoate: step 1/2. In terms of biological role, catalyzes the reversible reaction in which hydroxymethyl group from 5,10-methylenetetrahydrofolate is transferred onto alpha-ketoisovalerate to form ketopantoate. The chain is 3-methyl-2-oxobutanoate hydroxymethyltransferase from Burkholderia vietnamiensis (strain G4 / LMG 22486) (Burkholderia cepacia (strain R1808)).